The sequence spans 298 residues: MPGFTCCVPGCYSNSHRDKGLHFYTFPKDPELRCLWLKNVSRGGVSGCFSTFQPTNGHRVCSLHFQGGRKSYSIKVPTIFPLRGVNEKRTRRSSTKKRQQPNYTPAATTVLVTGLPGQEEQEVLELTAGGAEMMLLSTTAGMGATITNVEGSSAVIGATIDAMGTAAVERGSVAAPSNLAVKLDVGEAHAISTHFSSDASHGSHQQLQVVVVGDEPFPSVDCWPSLLGSDHSYSMSSGTTTEELLRKLNEQRDIIALMEVKMKEMKSSIKHLKVTEVKLREELRQKDKDKVSPMIKSN.

A THAP-type zinc finger spans residues 6-64; sequence CCVPGCYSNSHRDKGLHFYTFPKDPELRCLWLKNVSRGGVSGCFSTFQPTNGHRVCSLH. A coiled-coil region spans residues 242-283; sequence EELLRKLNEQRDIIALMEVKMKEMKSSIKHLKVTEVKLREEL.

The protein belongs to the THAP11 family.

The protein resides in the nucleus. Transcriptional repressor that plays a central role for embryogenesis and the pluripotency of embryonic stem (ES) cells. Sequence-specific DNA-binding factor that represses gene expression in pluripotent ES cells by directly binding to key genetic loci and recruiting epigenetic modifiers. This is THAP domain-containing protein 11 (thap11) from Xenopus laevis (African clawed frog).